Consider the following 259-residue polypeptide: UPF0246 protein PSPA7_1607 (259 aa).

Belongs to the UPF0246 family.

In Pseudomonas paraeruginosa (strain DSM 24068 / PA7) (Pseudomonas aeruginosa (strain PA7)), this protein is UPF0246 protein PSPA7_1607.